A 481-amino-acid chain; its full sequence is Abl interactor 1 (481 aa).

Alanine 2 carries the post-translational modification N-acetylalanine. The required for binding to WASF1 stretch occupies residues 18–79 (ALIESYQNLT…NNVLQLLDIQ (62 aa)). Residues 45–107 (KALEETKAYT…DIHKEKVARR (63 aa)) enclose the t-SNARE coiled-coil homology domain. Tyrosine 53 bears the Phosphotyrosine mark. Positions 158–285 (AKHGNNQPAR…PGAAPGSQYG (128 aa)) are disordered. Positions 161–175 (GNNQPARTGTLSRTN) are enriched in polar residues. Residues threonine 174 and threonine 178 each carry the phosphothreonine modification. 2 positions are modified to phosphoserine: serine 183 and serine 187. Residue tyrosine 213 is modified to Phosphotyrosine. At threonine 215 the chain carries Phosphothreonine. A phosphoserine mark is found at serine 216, serine 222, and serine 225. Over residues 222-235 (SQHSPGRTASLNQR) the composition is skewed to polar residues. Low complexity-rich tracts occupy residues 248 to 258 (SRENSGSSSIG) and 272 to 282 (GPAAPGAAPGS). Phosphoserine occurs at positions 292 and 296. 2 disordered regions span residues 318 to 348 (AQPH…LTPQ) and 361 to 392 (NIAD…PPPV). 2 stretches are compositionally biased toward pro residues: residues 366-376 (PTPPPPPPPDD) and 383-392 (SPPPPPPPPV). Residues 419–478 (NYIEKVVAIYDYTKDKDDELSFKEGAIIYVIKKNDDGWFEGVCNRVTGLFPGNYVESIMH) form the SH3 domain. At tyrosine 428 the chain carries Phosphotyrosine. A Phosphoserine modification is found at serine 439. Phosphothreonine is present on threonine 480.

Belongs to the ABI family. As to quaternary structure, interacts with ENAH, Abelson murine leukemia virus V-ABL, ABL1, STX1A, SNAP25, VAMP2, and through its N-terminus with WASF1. Part of a complex consisting of ABI1, STX1A and SNAP25. Part of a complex consisting of ABI1, EPS8 and SOS1. Interacts with EPS8, SOS1, SOS2, GRB2, SPTA1, and the first SH3 domain of NCK1. Component of the WAVE2 complex composed of ABI1, CYFIP1/SRA1, NCKAP1/NAP1 (NCKAP1l/HEM1 in hematopoietic cells) and WASF2/WAVE2. Interacts (via SH3 domain) with SHANK2 and SHANK3, but not SHANK1; the interaction is direct. Interacts with the heterodimer MYC:MAX; the interaction may enhance MYC:MAX transcriptional activity. Interacts with FNBP1L (via the SH3 domain), WASF2, and CDC42, but only in the presence of FNBP1L. In terms of processing, phosphorylated on tyrosine residues after serum stimulation or induction by v-Abl. Seems to be phosphorylated at Tyr-53 by ABL1, required for nuclear but not for synaptic localization. In terms of tissue distribution, widely expressed with highest levels in bone marrow, spleen, brain, testes, and embryonic brain. In adult brain prominently expressed in the neocortex, hippocampus and dentate gyrus.

The protein resides in the cytoplasm. Its subcellular location is the nucleus. It localises to the cell projection. It is found in the lamellipodium. The protein localises to the filopodium. The protein resides in the growth cone. Its subcellular location is the postsynaptic density. It localises to the cytoskeleton. Its function is as follows. May act in negative regulation of cell growth and transformation by interacting with nonreceptor tyrosine kinases ABL1 and/or ABL2. In vitro, at least isoform 2 and isoform 4 suppress the transforming activity of Abelson murine leukemia virus (v-Abl) after overexpression in fibroblasts. May play a role in regulation EGF-induced Erk pathway activation. Involved in cytoskeletal reorganization and EGFR signaling. Together with EPS8 participates in transduction of signals from Ras to Rac. In vitro, a trimeric complex of ABI1, EPS8 and SOS1 exhibits Rac specific guanine nucleotide exchange factor (GEF) activity and ABI1 seems to act as an adapter in the complex. Regulates ABL1/c-Abl-mediated phosphorylation of ENAH. Recruits WASF1 to lamellipodia and there seems to regulate WASF1 protein level. In brain, seems to regulate the dendritic outgrowth and branching as well as to determine the shape and number of synaptic contacts of developing neurons. This chain is Abl interactor 1, found in Mus musculus (Mouse).